The following is a 2320-amino-acid chain: Bromodomain and WD repeat-containing protein 1 (2320 aa).

WD repeat units follow at residues 184 to 223, 226 to 265, 268 to 311, 322 to 365, 366 to 405, 424 to 463, 466 to 506, and 514 to 553; these read GHLS…LLST, GHSA…PVAV, GHTG…LKFS, RPGV…AELE, SHTD…WRSI, FMKP…LLHN, GHAD…KMKH, and QGHG…PYEK. The disordered stretch occupies residues 668–691; sequence QRMGADQDTIPRGLSNGEETPRRG. Thr-687 carries the phosphothreonine modification. Phosphoserine is present on residues Ser-696, Ser-701, and Ser-710. Disordered stretches follow at residues 809 to 867 and 895 to 925; these read NRSW…RYSD and SEDE…ENLR. Low complexity-rich tracts occupy residues 814 to 824 and 854 to 867; these read ELSSGNESSSS and YSES…RYSD. The span at 907–918 shows a compositional bias: basic residues; that stretch reads PKRRRKRKKENK. Residues 1157 to 1264 form the Bromo 1 domain; it reads WGQKSRDEEC…DQLLKFIKNQ (108 aa). Residues 1271 to 1304 are disordered; the sequence is ELSNTSENDEQNAEDLDDSDLPKTSSGRRRVHDG. Positions 1277–1289 are enriched in acidic residues; sequence ENDEQNAEDLDDS. Residue Ser-1289 is modified to Phosphoserine. One can recognise a Bromo 2 domain in the interval 1313–1418; it reads YVESNWKKQC…ALFEEKMKKI (106 aa). Residues 1434-1593 form a disordered region; sequence RSQRFKQRQN…TGPVSLANGC (160 aa). A compositionally biased stretch (polar residues) spans 1443–1454; it reads NCKGDSQPNKSI. The segment covering 1455-1464 has biased composition (basic residues); it reads RNLKPKRLKS. Ser-1475 carries the phosphoserine modification. Residues 1475–1496 show a composition bias toward polar residues; it reads SPTQSTSSRTAYLGTHKTSAGI. At Thr-1477 the chain carries Phosphothreonine. Ser-1479 carries the phosphoserine modification. The segment covering 1497 to 1509 has biased composition (low complexity); sequence SSGVTSGDSSDSA. Over residues 1520-1529 the composition is skewed to polar residues; it reads PITNGSTLSE. A compositionally biased stretch (low complexity) spans 1535-1548; sequence SLATSLSSSASSSS. The span at 1549-1561 shows a compositional bias: basic and acidic residues; the sequence is EESKESSRARESS. Residues Ser-1605, Ser-1607, Ser-1678, Ser-1683, and Ser-1686 each carry the phosphoserine modification. Disordered stretches follow at residues 1670 to 1805, 1817 to 1839, and 1862 to 1899; these read ARKK…KYNT, KILS…KCHK, and DHGC…KISR. Over residues 1676 to 1687 the composition is skewed to basic and acidic residues; that stretch reads HNSEDEQSLKSE. The span at 1701-1712 shows a compositional bias: polar residues; it reads PVSSSHTAQSNV. Basic and acidic residues-rich tracts occupy residues 1715 to 1728 and 1751 to 1769; these read SENR…DLRV and LKIE…DHAC. A phosphoserine mark is found at Ser-1755, Ser-1756, Ser-1786, Ser-1788, Ser-1793, and Ser-1820. Residues 1821–1832 show a composition bias toward acidic residues; sequence DSEDSESEEQDR. Thr-1867 is subject to Phosphothreonine. Ser-1871, Ser-1904, Ser-1905, Ser-1907, Ser-1910, and Ser-1943 each carry phosphoserine. The residue at position 1955 (Thr-1955) is a Phosphothreonine. Disordered regions lie at residues 2014–2077 and 2112–2184; these read LNGD…TLAQ and TKVI…TKGK. Residues Ser-2018, Ser-2020, and Ser-2052 each carry the phosphoserine modification. Basic and acidic residues-rich tracts occupy residues 2054–2069 and 2114–2139; these read EDSK…DRTF and VIHD…ENVK. The segment covering 2140–2165 has biased composition (polar residues); the sequence is ISETTGNSKFRPDTSSKSSDLGSVTE. The residue at position 2164 (Thr-2164) is a Phosphothreonine. Phosphoserine occurs at positions 2166 and 2214.

As to quaternary structure, interacts with SMARCA4. Ubiquitously expressed. Expressed in respiratory epithelial cells and testis spermatozoa.

The protein resides in the cytoplasm. The protein localises to the nucleus. It localises to the cell projection. Its subcellular location is the cilium membrane. It is found in the cytoskeleton. The protein resides in the flagellum axoneme. May be a transcriptional activator. May be involved in chromatin remodeling. Plays a role in the regulation of cell morphology and cytoskeletal organization. Required in the control of cell shape. The chain is Bromodomain and WD repeat-containing protein 1 (BRWD1) from Homo sapiens (Human).